The following is a 304-amino-acid chain: Aspartate carbamoyltransferase catalytic subunit (304 aa).

The carbamoyl phosphate site is built by arginine 54 and threonine 55. Lysine 83 provides a ligand contact to L-aspartate. 3 residues coordinate carbamoyl phosphate: arginine 104, histidine 132, and glutamine 135. L-aspartate is bound by residues arginine 165 and arginine 226. Carbamoyl phosphate contacts are provided by leucine 265 and proline 266.

It belongs to the aspartate/ornithine carbamoyltransferase superfamily. ATCase family. In terms of assembly, heterooligomer of catalytic and regulatory chains.

The enzyme catalyses carbamoyl phosphate + L-aspartate = N-carbamoyl-L-aspartate + phosphate + H(+). Its pathway is pyrimidine metabolism; UMP biosynthesis via de novo pathway; (S)-dihydroorotate from bicarbonate: step 2/3. Its function is as follows. Catalyzes the condensation of carbamoyl phosphate and aspartate to form carbamoyl aspartate and inorganic phosphate, the committed step in the de novo pyrimidine nucleotide biosynthesis pathway. In Pyrobaculum neutrophilum (strain DSM 2338 / JCM 9278 / NBRC 100436 / V24Sta) (Thermoproteus neutrophilus), this protein is Aspartate carbamoyltransferase catalytic subunit.